The sequence spans 118 residues: Protein YLR162W (118 aa).

The span at 1 to 20 shows a compositional bias: polar residues; sequence MQHTLTRTASLPERSSSAHS. A disordered region spans residues 1–26; the sequence is MQHTLTRTASLPERSSSAHSAATALP. The helical transmembrane segment at 38 to 58 threads the bilayer; that stretch reads LVPLLCIFWFVFVSMSPLPPA.

It localises to the membrane. Overexpression confers resistance to the antimicrobial peptide MiAMP1. This is Protein YLR162W from Saccharomyces cerevisiae (strain ATCC 204508 / S288c) (Baker's yeast).